The primary structure comprises 267 residues: Ribosomal RNA small subunit methyltransferase A (267 aa).

Asparagine 16, leucine 18, glycine 43, glutamate 64, aspartate 89, and asparagine 110 together coordinate S-adenosyl-L-methionine.

It belongs to the class I-like SAM-binding methyltransferase superfamily. rRNA adenine N(6)-methyltransferase family. RsmA subfamily.

It localises to the cytoplasm. It catalyses the reaction adenosine(1518)/adenosine(1519) in 16S rRNA + 4 S-adenosyl-L-methionine = N(6)-dimethyladenosine(1518)/N(6)-dimethyladenosine(1519) in 16S rRNA + 4 S-adenosyl-L-homocysteine + 4 H(+). Specifically dimethylates two adjacent adenosines (A1518 and A1519) in the loop of a conserved hairpin near the 3'-end of 16S rRNA in the 30S particle. May play a critical role in biogenesis of 30S subunits. This is Ribosomal RNA small subunit methyltransferase A from Pseudomonas putida (strain ATCC 47054 / DSM 6125 / CFBP 8728 / NCIMB 11950 / KT2440).